The sequence spans 254 residues: MKLFVFFVAAVVLVAWPCHGAGYQRFPLRMKTGYGERSSEVKCASFRLAVEAHNIRAFKTIPEECVEPTKDYINGEQFRSDSKTVNQQAFFYASEREVHHNDIFIFGIDNTVLSNIPYYEKHGYGVEEFNETLYDEWVNKGDAPALPETLKNYNKLLSLGFKIVFLSGRYLDKMAVTEANLKKAGFHTWEQLILKDPHLITPNALSYKSAMRENLLRQGYRIVGIIGDQWSDLLGDHRGESRTFKLPNPMYYIE.

Residues 1–20 (MKLFVFFVAAVVLVAWPCHG) form the signal peptide. The propeptide occupies 21 to 35 (AGYQRFPLRMKTGYG). N-linked (GlcNAc...) asparagine glycosylation is present at asparagine 130.

It belongs to the APS1/VSP family. In terms of tissue distribution, accumulates in the stems of developing soybean seedlings.

Functionally, may function as somatic storage protein during early seedling development. The sequence is that of Stem 31 kDa glycoprotein (VSPB) from Glycine max (Soybean).